The chain runs to 68 residues: Putative membrane protein insertion efficiency factor (68 aa).

Belongs to the UPF0161 family.

It is found in the cell membrane. Its function is as follows. Could be involved in insertion of integral membrane proteins into the membrane. This is Putative membrane protein insertion efficiency factor from Syntrophomonas wolfei subsp. wolfei (strain DSM 2245B / Goettingen).